Reading from the N-terminus, the 468-residue chain is ATP synthase subunit beta 2 (468 aa).

Residue 155–162 (GGAGVGKT) participates in ATP binding.

This sequence belongs to the ATPase alpha/beta chains family. In terms of assembly, F-type ATPases have 2 components, CF(1) - the catalytic core - and CF(0) - the membrane proton channel. CF(1) has five subunits: alpha(3), beta(3), gamma(1), delta(1), epsilon(1). CF(0) has four main subunits: a(1), b(1), b'(1) and c(9-12).

The protein localises to the cell inner membrane. The catalysed reaction is ATP + H2O + 4 H(+)(in) = ADP + phosphate + 5 H(+)(out). In terms of biological role, produces ATP from ADP in the presence of a proton gradient across the membrane. The catalytic sites are hosted primarily by the beta subunits. This chain is ATP synthase subunit beta 2, found in Chlorobium luteolum (strain DSM 273 / BCRC 81028 / 2530) (Pelodictyon luteolum).